We begin with the raw amino-acid sequence, 87 residues long: Small ribosomal subunit protein bS20 (87 aa).

This sequence belongs to the bacterial ribosomal protein bS20 family.

In terms of biological role, binds directly to 16S ribosomal RNA. In Alkaliphilus oremlandii (strain OhILAs) (Clostridium oremlandii (strain OhILAs)), this protein is Small ribosomal subunit protein bS20.